The following is a 260-amino-acid chain: MQHLPAPIHHARDAVQLPVAIDYPAALALRQMSMVHDELPKYLLAPEVSALLHYVPDLRRKMLLATLWNTGARINEALALTRGDFSLTPPYPFVQLATLKQRTEKAARTAGRMPAGQQTHRLVPLSDSWYVSQLQTMVATLKIPMERRNKRTGRTEKARIWEVTDRTVRTWIGEAVAAAAADGVTFSVPVTPHTFRHSYAMHMLYAGIPLKVLQSLMGHKSISSTEVYTKVFALDVAARHRVQFSMPESDAVTMLKNRHA.

The 204-residue stretch at 38–241 (ELPKYLLAPE…FALDVAARHR (204 aa)) folds into the Tyr recombinase domain. Catalysis depends on residues R73, K105, H193, R196, and H219. The active-site O-(3'-phospho-DNA)-tyrosine intermediate is the Y228.

The protein belongs to the 'phage' integrase family.

Functionally, this resolvase acts at the RfsF equivalent resolution sequence of pColBM-CL139. The protein is Resolvase (resD) of Escherichia coli.